The following is a 393-amino-acid chain: Na(+)/H(+) antiporter NhaA (393 aa).

A run of 11 helical transmembrane segments spans residues 14–34 (AAGM…NWSV), 60–80 (LLLW…GLEV), 96–116 (MLPL…FLLF), 125–145 (AGWA…LTLL), 155–175 (VFLL…IALF), 179–199 (QVFW…AYMN), 218–238 (VCIL…GFFI), 263–283 (FLIV…GIVL), 292–312 (LGIA…FSWL), 330–350 (IVAV…ITLL), and 362–382 (YAKL…YLAL).

The protein belongs to the NhaA Na(+)/H(+) (TC 2.A.33) antiporter family.

The protein localises to the cell inner membrane. It catalyses the reaction Na(+)(in) + 2 H(+)(out) = Na(+)(out) + 2 H(+)(in). Its function is as follows. Na(+)/H(+) antiporter that extrudes sodium in exchange for external protons. The protein is Na(+)/H(+) antiporter NhaA of Pectobacterium atrosepticum (strain SCRI 1043 / ATCC BAA-672) (Erwinia carotovora subsp. atroseptica).